A 357-amino-acid polypeptide reads, in one-letter code: Dynein axonemal assembly factor 10 (357 aa).

WD repeat units follow at residues 63–105, 115–154, 162–205, 207–249, 257–297, and 319–357; these read EKAK…VPVY, NTIDGVGGLGIGEGAPEIVTGSRDGTVKVWDPRQKDDPVA, ENKR…LRWE, NIKN…PTKG, AHKS…QRSK, and LSTQPVSSLDWSPDKRGLCICSSFDQMVRVLIVTKLHKI.

In terms of assembly, component of the PAQosome complex which is responsible for the biogenesis of several protein complexes and which consists of R2TP complex members RUVBL1, RUVBL2, RPAP3 and PIH1D1, URI complex members PFDN2, PFDN6, PDRG1, UXT and URI1 as well as ASDURF, POLR2E and DNAAF10/WDR92. Interacts with PIH1D1; the interaction associates DNAAF10 with the R2TP complex. Interacts with several dynein axonemal assembly factors.

The protein localises to the dynein axonemal particle. Key assembly factor specifically required for the stability of axonemal dynein heavy chains in cytoplasm. This is Dynein axonemal assembly factor 10 (DNAAF10) from Bos taurus (Bovine).